Consider the following 474-residue polypeptide: PTS system N-acetylmuramic acid-specific EIIBC component (474 aa).

One can recognise a PTS EIIB type-1 domain in the interval 1–89 (MAKEISSELL…SELLGEAPVQ (89 aa)). The Cytoplasmic portion of the chain corresponds to 1-123 (MAKEISSELL…LAKFATIFTP (123 aa)). Cys-29 serves as the catalytic Phosphocysteine intermediate; for EIIB activity. Positions 115–474 (AKFATIFTPL…LFGCRNVNLD (360 aa)) constitute a PTS EIIC type-1 domain. The chain crosses the membrane as a helical span at residues 124–144 (LIPGFIAAGLLLGIATLIATV). At 145–157 (MHVPADAQGTLPD) the chain is on the periplasmic side. Residues 158–178 (ALNFMKVFSKGLFTFLVILVG) form a helical membrane-spanning segment. Topologically, residues 179 to 180 (YN) are cytoplasmic. A helical transmembrane segment spans residues 181-201 (AAQAFGGTGVNGAIIAALFLL). Residues 202-217 (GYNPAATTGYYAGFHD) are Periplasmic-facing. Residues 218–238 (FFGLPIDPRGNIIGVLIAAWA) traverse the membrane as a helical segment. Residues 239–260 (CARIEGMVRRFMPDDLDMLLTS) lie on the Cytoplasmic side of the membrane. The chain crosses the membrane as a helical span at residues 261-281 (LITLLITATLAYLIIMPLGGW). At 282-301 (LFEGMSWLFMHLNSNPLGCA) the chain is on the periplasmic side. The helical transmembrane segment at 302 to 322 (VLAGLFLIAVVFGVHQGFIPV) threads the bilayer. Residues 323 to 334 (YLALMDSQGFNS) lie on the Cytoplasmic side of the membrane. Residues 335 to 355 (LFPILSMAGAGQVGAALALYW) traverse the membrane as a helical segment. Topologically, residues 356 to 368 (RAQPHSGLRSQVR) are periplasmic. Residues 369-389 (GAIIPGLLGVGEPLIYGVTLP) traverse the membrane as a helical segment. Residues 390-393 (RMKP) are Cytoplasmic-facing. Residues 394 to 414 (FITACLGGAAGGLFIGLIAWW) form a helical membrane-spanning segment. Residues 415–440 (GLPMGLNSAFGPSGLVALPLMTSAQG) are Periplasmic-facing. A helical membrane pass occupies residues 441-461 (ILPAMAIYAGGILVAWVCGFI). The Cytoplasmic segment spans residues 462–474 (FTTLFGCRNVNLD).

The protein resides in the cell inner membrane. It catalyses the reaction N-acetyl-beta-D-muramate(out) + N(pros)-phospho-L-histidyl-[protein] = N-acetyl-beta-D-muramate 6-phosphate(in) + L-histidyl-[protein]. In terms of biological role, the phosphoenolpyruvate-dependent sugar phosphotransferase system (sugar PTS), a major carbohydrate active transport system, catalyzes the phosphorylation of incoming sugar substrates concomitantly with their translocation across the cell membrane. This system is involved in N-acetylmuramic acid (MurNAc) transport, yielding cytoplasmic MurNAc-6-P. Is also able to take up anhydro-N-acetylmuramic acid (anhMurNAc), but cannot phosphorylate the carbon 6, probably because of the 1,6-anhydro ring. The polypeptide is PTS system N-acetylmuramic acid-specific EIIBC component (murP) (Shigella dysenteriae serotype 1 (strain Sd197)).